We begin with the raw amino-acid sequence, 230 residues long: DNA mismatch repair protein MutH (230 aa).

Belongs to the MutH family.

It is found in the cytoplasm. In terms of biological role, sequence-specific endonuclease that cleaves unmethylated GATC sequences. It is involved in DNA mismatch repair. The sequence is that of DNA mismatch repair protein MutH from Enterobacter sp. (strain 638).